The sequence spans 285 residues: MSIKIENLNHIYMPKTPFEKIALNNINCEIEDGEFVALIGHTGSGKSTFIQHLNGLLSPTSGNIIVDGVNIADKKVKLSDIRKKVGLVFQYPEYQLFEETIEKDIEYGPRNLGISEEEISKRVKKSMEMVGLDYETYKDKSPFDLSGGQKRRVAIAGVIAMEPKVLILDEPTAGLDPKGREDILAQIRLLHKEYGMTIIMVSHSMEDVAKIADRVIVMNSGEIVLDGKIAEVFKEVETLEKIGLAVPQVTYLIRELRNKGFNISEEIFTISQAKEALLEIIRNNN.

Residues 3-245 enclose the ABC transporter domain; the sequence is IKIENLNHIY…VETLEKIGLA (243 aa). Residue 40–47 coordinates ATP; it reads GHTGSGKS.

The protein belongs to the ABC transporter superfamily. Energy-coupling factor EcfA family. As to quaternary structure, forms a stable energy-coupling factor (ECF) transporter complex composed of 2 membrane-embedded substrate-binding proteins (S component), 2 ATP-binding proteins (A component) and 2 transmembrane proteins (T component).

The protein localises to the cell membrane. In terms of biological role, ATP-binding (A) component of a common energy-coupling factor (ECF) ABC-transporter complex. Unlike classic ABC transporters this ECF transporter provides the energy necessary to transport a number of different substrates. This Clostridium perfringens (strain 13 / Type A) protein is Energy-coupling factor transporter ATP-binding protein EcfA2.